The following is a 247-amino-acid chain: uncharacterized protein (247 aa).

The stretch at Ser-200–Asn-225 forms a coiled coil.

This is an uncharacterized protein from Acanthamoeba polyphaga (Amoeba).